Consider the following 515-residue polypeptide: ATP synthase subunit alpha (515 aa).

Residue 171–178 (GDRQTGKT) coordinates ATP.

This sequence belongs to the ATPase alpha/beta chains family. In terms of assembly, F-type ATPases have 2 components, CF(1) - the catalytic core - and CF(0) - the membrane proton channel. CF(1) has five subunits: alpha(3), beta(3), gamma(1), delta(1), epsilon(1). CF(0) has three main subunits: a(1), b(2) and c(9-12). The alpha and beta chains form an alternating ring which encloses part of the gamma chain. CF(1) is attached to CF(0) by a central stalk formed by the gamma and epsilon chains, while a peripheral stalk is formed by the delta and b chains.

The protein localises to the cell inner membrane. The catalysed reaction is ATP + H2O + 4 H(+)(in) = ADP + phosphate + 5 H(+)(out). Its function is as follows. Produces ATP from ADP in the presence of a proton gradient across the membrane. The alpha chain is a regulatory subunit. This chain is ATP synthase subunit alpha, found in Stenotrophomonas maltophilia (strain R551-3).